A 57-amino-acid polypeptide reads, in one-letter code: Metallothionein (57 aa).

This sequence belongs to the metallothionein superfamily. Type 14 family.

This protein complexes cadmium, zinc and copper. The sequence is that of Metallothionein (mtnA) from Thermostichus vulcanus (Synechococcus vulcanus).